Consider the following 129-residue polypeptide: Protein Turandot A1/2 (129 aa).

Positions 1–21 are cleaved as a signal peptide; sequence MNSSTALMCFALLLISPLCLG. The N-linked (GlcNAc...) asparagine glycan is linked to Asn49.

Belongs to the Turandot family.

The protein localises to the secreted. Functionally, a humoral factor that plays a role in stress tolerance; gives increased resistance to the lethal effects of bacterial challenge and stress. Regulated by the JAK/STAT pathway and NF-KB-like Relish pathway in the fat body, upd3 in the hemocytes and Mekk1 in response to septic injury and consequent immune response. This chain is Protein Turandot A1/2 (TotA1), found in Drosophila sechellia (Fruit fly).